The chain runs to 224 residues: Cytidylate kinase (224 aa).

G11–T19 provides a ligand contact to ATP.

This sequence belongs to the cytidylate kinase family. Type 1 subfamily.

Its subcellular location is the cytoplasm. The enzyme catalyses CMP + ATP = CDP + ADP. It carries out the reaction dCMP + ATP = dCDP + ADP. The protein is Cytidylate kinase of Listeria monocytogenes serotype 4a (strain HCC23).